We begin with the raw amino-acid sequence, 361 residues long: Oxidoreductase lepF (361 aa).

The helical transmembrane segment at 257–277 threads the bilayer; that stretch reads MLMLVLQAVLLPVFYVVAMPL.

The protein belongs to the NmrA-type oxidoreductase family.

Its subcellular location is the membrane. Oxidoreductase; part of the gene cluster 23 that mediates the biosynthesis of a family of 2-pyridones known as leporins. The hybrid PKS-NRPS synthetase lepA and the enoyl reductase lepG are responsible for fusion of phenylalanine with a hexaketide and subsequent release of the stable tetramic acid precursor, pre-leporin C. Because lepA lacks a designated enoylreductase (ER) domain, the required activity is provided the enoyl reductase lepG. It is possible that the dehydrogenase lepF also participates in production of pre-leporin C. Cytochrome P450 monooxygenase lepH is then required for the ring expansion step to yield leporin C. Leporin C is then presumably further oxidized by the N-hydroxylase lepD to form leporin B. LepI may possess a function in biosynthesis upstream of lepA. Leporin B is further oxidized in the presence of ferric ion to give the leporin B trimer-iron chelate, but whether or not this reaction is catalyzed by an enzyme in the pathway or by ferric ion is not determined yet. This chain is Oxidoreductase lepF, found in Aspergillus flavus (strain ATCC 200026 / FGSC A1120 / IAM 13836 / NRRL 3357 / JCM 12722 / SRRC 167).